A 338-amino-acid chain; its full sequence is ATPase GET3 (338 aa).

Residue 33–40 (KGGVGKTT) coordinates ATP. Residue Asp62 is part of the active site. Residues Glu242 and Asn269 each coordinate ATP. Residues Cys280 and Cys283 each contribute to the Zn(2+) site.

It belongs to the arsA ATPase family. Homodimer.

The protein resides in the cytoplasm. The protein localises to the endoplasmic reticulum. Functionally, ATPase required for the post-translational delivery of tail-anchored (TA) proteins to the endoplasmic reticulum. Recognizes and selectively binds the transmembrane domain of TA proteins in the cytosol. This complex then targets to the endoplasmic reticulum by membrane-bound receptors, where the tail-anchored protein is released for insertion. This process is regulated by ATP binding and hydrolysis. ATP binding drives the homodimer towards the closed dimer state, facilitating recognition of newly synthesized TA membrane proteins. ATP hydrolysis is required for insertion. Subsequently, the homodimer reverts towards the open dimer state, lowering its affinity for the membrane-bound receptor, and returning it to the cytosol to initiate a new round of targeting. The polypeptide is ATPase GET3 (Uncinocarpus reesii (strain UAMH 1704)).